We begin with the raw amino-acid sequence, 154 residues long: Endoribonuclease YbeY (154 aa).

Zn(2+) contacts are provided by histidine 113, histidine 117, and histidine 123.

Belongs to the endoribonuclease YbeY family. The cofactor is Zn(2+).

The protein localises to the cytoplasm. Single strand-specific metallo-endoribonuclease involved in late-stage 70S ribosome quality control and in maturation of the 3' terminus of the 16S rRNA. This chain is Endoribonuclease YbeY, found in Vibrio parahaemolyticus serotype O3:K6 (strain RIMD 2210633).